Here is a 694-residue protein sequence, read N- to C-terminus: Elongation factor G 2 (694 aa).

The tr-type G domain occupies 6–282; that stretch reads SKLRNIGISA…GVVDYLPDPT (277 aa). GTP contacts are provided by residues 15–22, 82–86, and 136–139; these read AHIDSGKT, DTPGH, and NKCD.

It belongs to the TRAFAC class translation factor GTPase superfamily. Classic translation factor GTPase family. EF-G/EF-2 subfamily.

It localises to the cytoplasm. In terms of biological role, catalyzes the GTP-dependent ribosomal translocation step during translation elongation. During this step, the ribosome changes from the pre-translocational (PRE) to the post-translocational (POST) state as the newly formed A-site-bound peptidyl-tRNA and P-site-bound deacylated tRNA move to the P and E sites, respectively. Catalyzes the coordinated movement of the two tRNA molecules, the mRNA and conformational changes in the ribosome. The sequence is that of Elongation factor G 2 from Anaeromyxobacter dehalogenans (strain 2CP-C).